The sequence spans 364 residues: Phosphate acyltransferase (364 aa).

The disordered stretch occupies residues 343–364; it reads IRTSGRSGGKSKSSAAREDGAA.

It belongs to the PlsX family. As to quaternary structure, homodimer. Probably interacts with PlsY.

It is found in the cytoplasm. The enzyme catalyses a fatty acyl-[ACP] + phosphate = an acyl phosphate + holo-[ACP]. The protein operates within lipid metabolism; phospholipid metabolism. In terms of biological role, catalyzes the reversible formation of acyl-phosphate (acyl-PO(4)) from acyl-[acyl-carrier-protein] (acyl-ACP). This enzyme utilizes acyl-ACP as fatty acyl donor, but not acyl-CoA. The protein is Phosphate acyltransferase of Novosphingobium aromaticivorans (strain ATCC 700278 / DSM 12444 / CCUG 56034 / CIP 105152 / NBRC 16084 / F199).